The sequence spans 358 residues: Photosystem II protein D1 (358 aa).

Transmembrane regions (helical) follow at residues 28–45, 117–132, and 141–155; these read YVGW…AAAI, HFLI…QWEL, and WICV…AAFA. His117 lines the chlorophyll a pocket. Trp125 serves as a coordination point for pheophytin a. The [CaMn4O5] cluster site is built by Asp169 and Glu188. A helical membrane pass occupies residues 196–217; it reads FHMIGVAGMFGGSLFSAMHGSL. Residue His197 participates in chlorophyll a binding. A quinone-binding positions include His214 and 263–264; that span reads SF. Residue His214 coordinates Fe cation. A Fe cation-binding site is contributed by His271. The chain crosses the membrane as a helical span at residues 273-287; the sequence is FLAAWPVICIWITSL. Residues His331, Glu332, Asp341, and Ala343 each contribute to the [CaMn4O5] cluster site. A propeptide spanning residues 344 to 358 is cleaved from the precursor; the sequence is AAESTPVALIAPAIG.

It belongs to the reaction center PufL/M/PsbA/D family. PSII is composed of 1 copy each of membrane proteins PsbA, PsbB, PsbC, PsbD, PsbE, PsbF, PsbH, PsbI, PsbJ, PsbK, PsbL, PsbM, PsbT, PsbX, PsbY, Psb30/Ycf12, peripheral proteins PsbO, CyanoQ (PsbQ), PsbU, PsbV and a large number of cofactors. It forms dimeric complexes. The D1/D2 heterodimer binds P680, chlorophylls that are the primary electron donor of PSII, and subsequent electron acceptors. It shares a non-heme iron and each subunit binds pheophytin, quinone, additional chlorophylls, carotenoids and lipids. D1 provides most of the ligands for the Mn4-Ca-O5 cluster of the oxygen-evolving complex (OEC). There is also a Cl(-1) ion associated with D1 and D2, which is required for oxygen evolution. The PSII complex binds additional chlorophylls, carotenoids and specific lipids. is required as a cofactor. Tyr-160 forms a radical intermediate that is referred to as redox-active TyrZ, YZ or Y-Z. In terms of processing, C-terminally processed by CtpA; processing is essential to allow assembly of the oxygen-evolving complex and thus photosynthetic growth.

Its subcellular location is the cellular thylakoid membrane. The enzyme catalyses 2 a plastoquinone + 4 hnu + 2 H2O = 2 a plastoquinol + O2. In terms of biological role, photosystem II (PSII) is a light-driven water:plastoquinone oxidoreductase that uses light energy to abstract electrons from H(2)O, generating O(2) and a proton gradient subsequently used for ATP formation. It consists of a core antenna complex that captures photons, and an electron transfer chain that converts photonic excitation into a charge separation. The D1/D2 (PsbA/PsbD) reaction center heterodimer binds P680, the primary electron donor of PSII as well as several subsequent electron acceptors. The sequence is that of Photosystem II protein D1 from Prochlorococcus marinus (strain MIT 9303).